Consider the following 203-residue polypeptide: Holliday junction branch migration complex subunit RuvA (203 aa).

The interval 1-64 is domain I; it reads MIGRLRGIIL…EDAQLLYGFN (64 aa). Residues 65–142 form a domain II region; sequence NKQERTLFKE…KGLHGDLFTP (78 aa). Positions 143 to 154 are flexible linker; the sequence is AADLVLTSPASP. The interval 155-203 is domain III; that stretch reads ATDDAEQEAVAALVALGYKPQEASRMVSKIARPDASSETLIREALRAAL.

Belongs to the RuvA family. As to quaternary structure, homotetramer. Forms an RuvA(8)-RuvB(12)-Holliday junction (HJ) complex. HJ DNA is sandwiched between 2 RuvA tetramers; dsDNA enters through RuvA and exits via RuvB. An RuvB hexamer assembles on each DNA strand where it exits the tetramer. Each RuvB hexamer is contacted by two RuvA subunits (via domain III) on 2 adjacent RuvB subunits; this complex drives branch migration. In the full resolvosome a probable DNA-RuvA(4)-RuvB(12)-RuvC(2) complex forms which resolves the HJ.

Its subcellular location is the cytoplasm. Functionally, the RuvA-RuvB-RuvC complex processes Holliday junction (HJ) DNA during genetic recombination and DNA repair, while the RuvA-RuvB complex plays an important role in the rescue of blocked DNA replication forks via replication fork reversal (RFR). RuvA specifically binds to HJ cruciform DNA, conferring on it an open structure. The RuvB hexamer acts as an ATP-dependent pump, pulling dsDNA into and through the RuvAB complex. HJ branch migration allows RuvC to scan DNA until it finds its consensus sequence, where it cleaves and resolves the cruciform DNA. In Citrobacter koseri (strain ATCC BAA-895 / CDC 4225-83 / SGSC4696), this protein is Holliday junction branch migration complex subunit RuvA.